Reading from the N-terminus, the 409-residue chain is NADH-quinone oxidoreductase subunit D (409 aa).

Belongs to the complex I 49 kDa subunit family. In terms of assembly, NDH-1 is composed of 14 different subunits. Subunits NuoB, C, D, E, F, and G constitute the peripheral sector of the complex.

The protein localises to the cell inner membrane. The catalysed reaction is a quinone + NADH + 5 H(+)(in) = a quinol + NAD(+) + 4 H(+)(out). In terms of biological role, NDH-1 shuttles electrons from NADH, via FMN and iron-sulfur (Fe-S) centers, to quinones in the respiratory chain. The immediate electron acceptor for the enzyme in this species is believed to be ubiquinone. Couples the redox reaction to proton translocation (for every two electrons transferred, four hydrogen ions are translocated across the cytoplasmic membrane), and thus conserves the redox energy in a proton gradient. This Thermus thermophilus (strain ATCC BAA-163 / DSM 7039 / HB27) protein is NADH-quinone oxidoreductase subunit D (nuoD).